The sequence spans 132 residues: Histone H2B.2 (132 aa).

Over residues 1–19 (MAPKAEKKPASKAPAEKKP) the composition is skewed to basic and acidic residues. A disordered region spans residues 1–39 (MAPKAEKKPASKAPAEKKPAAKKTSSSVDPSKKRTKARK). Residues Lys7 and Lys8 each carry the N6-acetyllysine; alternate modification. Residues Lys7 and Lys8 each participate in a glycyl lysine isopeptide (Lys-Gly) (interchain with G-Cter in SUMO); alternate cross-link. A Phosphoserine modification is found at Ser11. Residue Lys12 is modified to N6-acetyllysine. Residue Lys17 is modified to N6-acetyllysine; alternate. Lys17 participates in a covalent cross-link: Glycyl lysine isopeptide (Lys-Gly) (interchain with G-Cter in SUMO); alternate. A Glycyl lysine isopeptide (Lys-Gly) (interchain with G-Cter in SUMO) cross-link involves residue Lys18. A Glycyl lysine isopeptide (Lys-Gly) (interchain with G-Cter in ubiquitin) cross-link involves residue Lys125.

The protein belongs to the histone H2B family. As to quaternary structure, the nucleosome is a histone octamer containing two molecules each of H2A, H2B, H3 and H4 assembled in one H3-H4 heterotetramer and two H2A-H2B heterodimers. The octamer wraps approximately 147 bp of DNA. Monoubiquitinated by the UBC2-BRE1 complex to form H2BK123ub1. H2BK123ub1 gives a specific tag for epigenetic transcriptional activation and is also prerequisite for H3K4me and H3K79me formation. H2BK123ub1 also modulates the formation of double-strand breaks during meiosis and is a prerequisite for DNA-damage checkpoint activation. Post-translationally, phosphorylated by STE20 to form H2BS10ph during progression through meiotic prophase. May be correlated with chromosome condensation. In terms of processing, acetylated by GCN5 to form H2BK11ac and H2BK16ac. H2BK16ac can also be formed by ESA1. Acetylation of N-terminal lysines and particularly formation of H2BK11acK16ac has a positive effect on transcription. Sumoylation to form H2BK6su or H2BK7su, and probably also H2BK16su or H2BK17su, occurs preferentially near the telomeres and represses gene transcription.

Its subcellular location is the nucleus. It localises to the chromosome. Functionally, core component of nucleosome. Nucleosomes wrap and compact DNA into chromatin, limiting DNA accessibility to the cellular machineries which require DNA as a template. Histones thereby play a central role in transcription regulation, DNA repair, DNA replication and chromosomal stability. DNA accessibility is regulated via a complex set of post-translational modifications of histones, also called histone code, and nucleosome remodeling. This is Histone H2B.2 (HTB1) from Kluyveromyces lactis (strain ATCC 8585 / CBS 2359 / DSM 70799 / NBRC 1267 / NRRL Y-1140 / WM37) (Yeast).